The chain runs to 181 residues: MKQILDFIPLIIFFALYKMYDIYTATGALIVATAVQLILTYVLYKKVEKMQLITFIMVTVFGGMTIFLHDDNFIKWKVTIVYAVFAAGLIIAQILGRPIIKGMLGKEVTLPDNKWNKINYAWILFFTACSIANLYVAFEMPLDVWVNFKVFGLLGLTFIYTLLTGMYVYKHMPKEKKEEQE.

5 consecutive transmembrane segments (helical) span residues 22 to 42 (IYTA…LTYV), 50 to 70 (MQLI…FLHD), 80 to 100 (IVYA…RPII), 118 to 138 (INYA…YVAF), and 148 to 168 (FKVF…GMYV).

The protein belongs to the YciB family.

It localises to the cell inner membrane. Functionally, plays a role in cell envelope biogenesis, maintenance of cell envelope integrity and membrane homeostasis. This is Inner membrane-spanning protein YciB from Aliivibrio salmonicida (strain LFI1238) (Vibrio salmonicida (strain LFI1238)).